The sequence spans 492 residues: 2-succinylbenzoate--CoA ligase (492 aa).

It belongs to the ATP-dependent AMP-binding enzyme family. MenE subfamily.

It carries out the reaction 2-succinylbenzoate + ATP + CoA = 2-succinylbenzoyl-CoA + AMP + diphosphate. It functions in the pathway quinol/quinone metabolism; 1,4-dihydroxy-2-naphthoate biosynthesis; 1,4-dihydroxy-2-naphthoate from chorismate: step 5/7. It participates in quinol/quinone metabolism; menaquinone biosynthesis. Converts 2-succinylbenzoate (OSB) to 2-succinylbenzoyl-CoA (OSB-CoA). This chain is 2-succinylbenzoate--CoA ligase, found in Staphylococcus aureus (strain MRSA252).